The chain runs to 85 residues: U4-theraphotoxin-Hhn1g (85 aa).

An N-terminal signal peptide occupies residues 1-22 (MKVTLIAILTCAAVLVLHTTAA). A propeptide spanning residues 23–48 (EELEAESQLMEVGMPDTELAAVDEER) is cleaved from the precursor. Cystine bridges form between Cys52–Cys66, Cys56–Cys77, and Cys71–Cys82.

The protein belongs to the neurotoxin 12 (Hwtx-2) family. 02 (Hwtx-2) subfamily. Expressed by the venom gland.

It is found in the secreted. In terms of biological role, postsynaptic neurotoxin. This Cyriopagopus hainanus (Chinese bird spider) protein is U4-theraphotoxin-Hhn1g.